Consider the following 405-residue polypeptide: Succinyl-CoA--L-malate CoA-transferase beta subunit (405 aa).

Asp-175 (nucleophile) is an active-site residue.

This sequence belongs to the CoA-transferase III family. Forms a large complex composed of six heterodimers (alpha, beta).

It carries out the reaction succinyl-CoA + (S)-malate = (S)-malyl-CoA + succinate. It catalyses the reaction (3S)-citramalate + succinyl-CoA = (3S)-citramalyl-CoA + succinate. In terms of biological role, involved in the 3-hydroxypropionate cycle used for autotrophic carbon dioxide fixation. Catalyzes the transfer of CoA moiety from succinyl-CoA to L-malate to yield L-malyl-CoA. The chain is Succinyl-CoA--L-malate CoA-transferase beta subunit (smtB) from Chloroflexus aurantiacus (strain ATCC 29366 / DSM 635 / J-10-fl).